A 252-amino-acid polypeptide reads, in one-letter code: Carbonic anhydrase (252 aa).

Residues 1 to 26 (MPRFPRTLPRLTAVLLLACTAFSAAA) form the signal peptide. The Alpha-carbonic anhydrase domain maps to 31 to 252 (THWGYTGHDS…QPLNARVVIE (222 aa)). Cysteine 54 and cysteine 207 are joined by a disulfide. Histidine 92 functions as the Proton acceptor in the catalytic mechanism. Zn(2+) contacts are provided by histidine 118, histidine 120, and histidine 137. 203–204 (TT) serves as a coordination point for substrate.

It belongs to the alpha-carbonic anhydrase family. As to quaternary structure, homodimer. Requires Zn(2+) as cofactor.

The protein localises to the periplasm. The enzyme catalyses hydrogencarbonate + H(+) = CO2 + H2O. Its function is as follows. Reversible hydration of carbon dioxide. The polypeptide is Carbonic anhydrase (cah) (Neisseria gonorrhoeae).